Reading from the N-terminus, the 474-residue chain is UDP-N-acetylmuramate--L-alanine ligase (474 aa).

119 to 125 (GTHGKTT) provides a ligand contact to ATP.

This sequence belongs to the MurCDEF family.

The protein localises to the cytoplasm. It carries out the reaction UDP-N-acetyl-alpha-D-muramate + L-alanine + ATP = UDP-N-acetyl-alpha-D-muramoyl-L-alanine + ADP + phosphate + H(+). Its pathway is cell wall biogenesis; peptidoglycan biosynthesis. Functionally, cell wall formation. This is UDP-N-acetylmuramate--L-alanine ligase from Jannaschia sp. (strain CCS1).